The following is a 456-amino-acid chain: Cysteine--tRNA ligase (456 aa).

Cys28 is a Zn(2+) binding site. The 'HIGH' region motif lies at 30–40 (MTVYDYCHLGH). Positions 209, 234, and 238 each coordinate Zn(2+). The 'KMSKS' region signature appears at 266 to 270 (KMSKS). Lys269 contributes to the ATP binding site.

Belongs to the class-I aminoacyl-tRNA synthetase family. In terms of assembly, monomer. Zn(2+) is required as a cofactor.

It localises to the cytoplasm. The catalysed reaction is tRNA(Cys) + L-cysteine + ATP = L-cysteinyl-tRNA(Cys) + AMP + diphosphate. In Dechloromonas aromatica (strain RCB), this protein is Cysteine--tRNA ligase.